The following is a 396-amino-acid chain: Elongation factor Tu (396 aa).

The region spanning 11–205 (KPHVNIGTIG…VVDEYIPTPE (195 aa)) is the tr-type G domain. A G1 region spans residues 20–27 (GHVDHGKT). 20-27 (GHVDHGKT) contacts GTP. Thr27 is a Mg(2+) binding site. A G2 region spans residues 61–65 (GITIN). The interval 82–85 (DAPG) is G3. GTP contacts are provided by residues 82-86 (DAPGH) and 137-140 (NKCD). A G4 region spans residues 137 to 140 (NKCD). The tract at residues 175 to 177 (SAL) is G5.

This sequence belongs to the TRAFAC class translation factor GTPase superfamily. Classic translation factor GTPase family. EF-Tu/EF-1A subfamily. Monomer.

The protein localises to the cytoplasm. It catalyses the reaction GTP + H2O = GDP + phosphate + H(+). In terms of biological role, GTP hydrolase that promotes the GTP-dependent binding of aminoacyl-tRNA to the A-site of ribosomes during protein biosynthesis. This chain is Elongation factor Tu, found in Lactobacillus delbrueckii subsp. bulgaricus (strain ATCC 11842 / DSM 20081 / BCRC 10696 / JCM 1002 / NBRC 13953 / NCIMB 11778 / NCTC 12712 / WDCM 00102 / Lb 14).